A 245-amino-acid polypeptide reads, in one-letter code: Myozenin-3 (245 aa).

Ser31 is modified (phosphoserine). Residues 50–67 (LLFQKRQRRVQKFTFELS) are binding to ACTN2, PPP3CA and TCAP. Residues 67 to 108 (SESLQAILASSARGKVAGRAAQATVPNGLEEQNHHSETHVFQ) form a binding to FLNC region. The tract at residues 93 to 134 (NGLEEQNHHSETHVFQGSPGDPGITHLGAAGTGSVRSPSALA) is disordered. Positions 180-201 (PIPRDYRNFNKTPVPFGGPHVR) are binding to ACTN2.

The protein belongs to the myozenin family. Interacts with ACTN2, LDB3, FLNC, PPP3CA and TCAP. Expressed specifically in skeletal muscle and is enriched in fast-twitch muscle fibers. Not detected in heart.

Its subcellular location is the cytoplasm. It localises to the myofibril. It is found in the sarcomere. The protein localises to the z line. In terms of biological role, myozenins may serve as intracellular binding proteins involved in linking Z line proteins such as alpha-actinin, gamma-filamin, TCAP/telethonin, LDB3/ZASP and localizing calcineurin signaling to the sarcomere. Plays an important role in the modulation of calcineurin signaling. May play a role in myofibrillogenesis. The polypeptide is Myozenin-3 (Mus musculus (Mouse)).